The primary structure comprises 554 residues: MEKQSLTFDGDEEAKIDRKSSKYHPSIWGDYFIQNSSLTHAKESTQRMIKRVEELKVQVKSMFKDTSDLLQLMNLINSIQMLGLDYHFENEIDEALRLIYEVDDKSYGLYETSLRFQLLRQHGYHVSADIFNKFKDDNGSFISSLNGDAKGLLSLYNVSYLGTHGETILDEAKSFTKPQLVSLMSELEQSLAAQVSLFLELPLCRRNKILLARKYILIYQEDAMRNNVILELAKLNFNLLQSLYQEELKKISIWWNDLAFAKSLSFTRDRVVEGYYWVLTIYFEPQHSRARVICSKVFAFLSIMDDIYDNYGILEECTLLTEAIKRWNPQAIDGLPEYLKDYYLKLLKTFEEFEDELELNEKYRMLYLQDEVKALAISYLQEAKWGIERHVPSLDEHLHNSLISSGSSTVICASFVGMGEVATKEVFDWLSSFPKVVEACCVIGRLLNDIRSHELEQGRDHTASTVESYMKEHDTNVDVACEKLREIVEKAWKDLNNESLNPTKVPRLMIERIVNLSKSNEEIYKYNDTYTNSDTTMKDNISLVLVESCDYFNK.

Residues Asp305, Asp309, and Glu456 each contribute to the Mg(2+) site. Residues 305-309 (DDIYD) carry the DDXXD motif motif.

It belongs to the terpene synthase family. Mg(2+) is required as a cofactor. Mn(2+) serves as cofactor. In terms of tissue distribution, expressed in rhizomes. Detected in stems, but not in leaves.

The protein localises to the cytoplasm. It catalyses the reaction (2E,6E)-farnesyl diphosphate + H2O = beta-eudesmol + diphosphate. The enzyme catalyses (2E,6E)-farnesyl diphosphate + H2O = 10-epi-gamma-eudesmol + diphosphate. It carries out the reaction (2E,6E)-farnesyl diphosphate + H2O = alpha-eudesmol + diphosphate. It functions in the pathway secondary metabolite biosynthesis; terpenoid biosynthesis. Functionally, involved in the biosynthesis of beta-eudesmol, a sesquiterpene with antifungal activity and responsible for resistance of plants to ant attack. Produces mainly beta-eudesmol, but also smaller amounts of 10-epi-gamma-eudesmol, alpha-eudesmol and aristolene. This is Beta-eudesmol synthase (ZSS2) from Zingiber zerumbet (Shampoo ginger).